The following is a 107-amino-acid chain: U1-lycotoxin-Ls1p (107 aa).

The first 20 residues, 1–20, serve as a signal peptide directing secretion; the sequence is MMKVLVVVALLVTLISYSSS. The propeptide occupies 21–41; it reads EGIDDLEADELLSLMANEQTR. 4 disulfides stabilise this stretch: Cys-44–Cys-59, Cys-51–Cys-68, Cys-58–Cys-86, and Cys-70–Cys-84.

It belongs to the neurotoxin 19 (CSTX) family. 04 (U1-Lctx) subfamily. In terms of tissue distribution, expressed by the venom gland.

The protein localises to the secreted. The protein is U1-lycotoxin-Ls1p of Lycosa singoriensis (Wolf spider).